The following is a 726-amino-acid chain: tRNA endonuclease ANKZF1 (726 aa).

The interval 40–61 (LARAPRTSCSGSGERESPERKL) is disordered. Over residues 52 to 61 (GERESPERKL) the composition is skewed to basic and acidic residues. A C2H2-type zinc finger spans residues 72–96 (LFCSTCDQTFQNHQEQREHYKLDWH). The segment covering 120-130 (STGDLSSISGS) has biased composition (low complexity). Residues 120–141 (STGDLSSISGSEDSDSASEEDL) are disordered. The segment covering 131–141 (EDSDSASEEDL) has biased composition (acidic residues). The region spanning 203 to 346 (GPRDCVVLMA…QRVLHKLTTL (144 aa)) is the VLRF1 domain. Gln246 is an active-site residue. Phosphoserine is present on residues Ser258, Ser361, and Ser398. Disordered regions lie at residues 387 to 409 (DEKE…EGED) and 436 to 474 (RRRR…SSQA). Residues 436 to 445 (RRRRKRNKKE) are compositionally biased toward basic residues. The segment covering 457-473 (TLLQQTQEEEPSTQSSQ) has biased composition (low complexity). One copy of the ANK 1 repeat lies at 493–526 (ELWNALLAACRAGDVGVLKLQLAPSPADPRVLSL). A Phosphoserine modification is found at Ser533. An ANK 2 repeat occupies 534–563 (GGFTLLHAAAAAGRGSVVRLLLEAGADPTV). Residues 588 to 656 (MEKNPDAYDY…RRFAALSDRE (69 aa)) are disordered. Thr607 carries the phosphothreonine modification. Positions 609-659 (EMEARQATRKREQKAARRQREEQQQRQQEQEEREREEQRRFAALSDREKRA) form a coiled coil. Over residues 610-656 (MEARQATRKREQKAARRQREEQQQRQQEQEEREREEQRRFAALSDRE) the composition is skewed to basic and acidic residues. A VCP/p97-interacting motif (VIM) region spans residues 654–666 (DREKRALAAERRL). Phosphoserine occurs at positions 675 and 680.

Belongs to the ANKZF1/VMS1 family. In terms of assembly, interacts (via VIM motif) with VCP.

It localises to the cytoplasm. Endonuclease that cleaves polypeptidyl-tRNAs downstream of the ribosome-associated quality control (RQC) pathway to release incompletely synthesized polypeptides for degradation. The RQC pathway disassembles aberrantly stalled translation complexes to recycle or degrade the constituent parts. ANKZF1 acts downstream disassembly of stalled ribosomes and specifically cleaves off the terminal 3'-CCA nucleotides universal to all tRNAs from polypeptidyl-tRNAs, releasing (1) ubiquitinated polypeptides from 60S ribosomal subunit for degradation and (2) cleaved tRNAs. ANKZF1-cleaved tRNAs are then repaired and recycled by ELAC1 and TRNT1. Also plays a role in the cellular response to hydrogen peroxide and in the maintenance of mitochondrial integrity under conditions of cellular stress. This chain is tRNA endonuclease ANKZF1, found in Homo sapiens (Human).